The chain runs to 178 residues: Nascent polypeptide-associated complex subunit alpha (178 aa).

One can recognise an NAC-A/B domain in the interval 16–80 (PKNEKKAREL…AKVDDMNQRI (65 aa)). Residues 82–100 (EAQAQQAQQEALQKAAADA) show a composition bias toward low complexity. The interval 82–145 (EAQAQQAQQE…DETGLDPKDI (64 aa)) is disordered. Basic and acidic residues predominate over residues 101 to 126 (GKTEDKSPEAITADLEKASLGDKKAE). Residues 127–139 (DEEEDEGEIDETG) show a composition bias toward acidic residues. One can recognise a UBA domain in the interval 140–178 (LDPKDIEIVVEQTQVSRAKAVKALRNHDGDMVNAIMDLS).

The protein belongs to the NAC-alpha family. Part of the nascent polypeptide-associated complex (NAC), consisting of EGD2 and EGD1. NAC associates with ribosomes via EGD1.

The protein localises to the cytoplasm. It is found in the nucleus. Its function is as follows. Component of the nascent polypeptide-associated complex (NAC), a dynamic component of the ribosomal exit tunnel, protecting the emerging polypeptides from interaction with other cytoplasmic proteins to ensure appropriate nascent protein targeting. The NAC complex also promotes mitochondrial protein import by enhancing productive ribosome interactions with the outer mitochondrial membrane and blocks the inappropriate interaction of ribosomes translating non-secretory nascent polypeptides with translocation sites in the membrane of the endoplasmic reticulum. EGD2 may also be involved in transcription regulation. The protein is Nascent polypeptide-associated complex subunit alpha (EGD2) of Candida albicans (strain SC5314 / ATCC MYA-2876) (Yeast).